The following is a 35-amino-acid chain: U5-ctenitoxin-Co1a (35 aa).

Disulfide bonds link cysteine 4–cysteine 18, cysteine 11–cysteine 24, cysteine 17–cysteine 32, and cysteine 26–cysteine 30.

In terms of tissue distribution, expressed by the venom gland.

Its subcellular location is the secreted. Functionally, blocks voltage-gated sodium channels (Nav). This is U5-ctenitoxin-Co1a from Ctenus ornatus (Brazilian spider).